Consider the following 325-residue polypeptide: MRNITEATFFVLKGLTDNNELQIILFLLFLAIYIFTLIGNVGLIILVVGDSQLHNPMYCFLSVLSSVDACYSTDITPNMLVGFMSKSKIISFYGCATQMFLAVTFGTTECFLLAAMAYDRYVAIHDPLLYAVSMSPRVYIPLIIASYAGGIVHAIIHTVATFSLSFCRSNEVKHIFCDIPPLLAISCSETYVNELLLFFFVSFIELVTILIVLVSYAFILLSILKMNSSEGRRKVFSTCGAHLTAVSIYYGTILFMYVRPSSNYSLEHDMIVSTFYTIGIPMLNPIIYSLRNKDVKEAMKRVLRKKINIKHRIKKLNDFSVFLMP.

Residues 1-22 (MRNITEATFFVLKGLTDNNELQ) are Extracellular-facing. A glycan (N-linked (GlcNAc...) asparagine) is linked at Asn3. Helical transmembrane passes span 23 to 43 (IILF…NVGL) and 44 to 64 (IILV…LSVL). Over 65–97 (SSVDACYSTDITPNMLVGFMSKSKIISFYGCAT) the chain is Extracellular. The cysteines at positions 95 and 187 are disulfide-linked. The helical transmembrane segment at 98–118 (QMFLAVTFGTTECFLLAAMAY) threads the bilayer. At 119–139 (DRYVAIHDPLLYAVSMSPRVY) the chain is on the cytoplasmic side. A helical transmembrane segment spans residues 140 to 160 (IPLIIASYAGGIVHAIIHTVA). At 161–194 (TFSLSFCRSNEVKHIFCDIPPLLAISCSETYVNE) the chain is on the extracellular side. A helical membrane pass occupies residues 195–215 (LLLFFFVSFIELVTILIVLVS). The Cytoplasmic segment spans residues 216 to 234 (YAFILLSILKMNSSEGRRK). The chain crosses the membrane as a helical span at residues 235 to 255 (VFSTCGAHLTAVSIYYGTILF). At 256-269 (MYVRPSSNYSLEHD) the chain is on the extracellular side. The chain crosses the membrane as a helical span at residues 270 to 290 (MIVSTFYTIGIPMLNPIIYSL). Over 291–325 (RNKDVKEAMKRVLRKKINIKHRIKKLNDFSVFLMP) the chain is Cytoplasmic.

This sequence belongs to the G-protein coupled receptor 1 family.

The protein resides in the cell membrane. In terms of biological role, potential odorant receptor. The chain is Olfactory receptor 5T18 from Mus musculus (Mouse).